We begin with the raw amino-acid sequence, 61 residues long: Small ribosomal subunit protein uS14 (61 aa).

Zn(2+) is bound by residues Cys-24, Cys-27, Cys-40, and Cys-43.

This sequence belongs to the universal ribosomal protein uS14 family. Zinc-binding uS14 subfamily. As to quaternary structure, part of the 30S ribosomal subunit. Contacts proteins S3 and S10. The cofactor is Zn(2+).

Functionally, binds 16S rRNA, required for the assembly of 30S particles and may also be responsible for determining the conformation of the 16S rRNA at the A site. The polypeptide is Small ribosomal subunit protein uS14 (Mycoplasma capricolum subsp. capricolum (strain California kid / ATCC 27343 / NCTC 10154)).